A 425-amino-acid chain; its full sequence is CAAX prenyl protease 1 homolog (425 aa).

Transmembrane regions (helical) follow at residues 3-23 (LPYLEAVLCFMILMYIFETYL), 62-80 (FHFIHEAVTILMDTTILYY), 109-129 (LAFLAGVMIWSQITDLPFSLY), 155-175 (GILLSILLGPPIVAAIIIIVQ), and 188-208 (FMFALSLVMMTIYPIVIAPLF). His284 serves as a coordination point for Zn(2+). The active site involves Glu285. Residue His288 participates in Zn(2+) binding. Helical transmembrane passes span 295 to 315 (VYSFVAVQLLMFLQFGGYTLV) and 332 to 352 (VIIGLIIFQHTIIPVQHLLSF). A Zn(2+)-binding site is contributed by Glu362. Residue Asp366 is the Proton donor of the active site.

The protein belongs to the peptidase M48A family. It depends on Zn(2+) as a cofactor.

It is found in the endoplasmic reticulum membrane. It catalyses the reaction Hydrolyzes the peptide bond -P2-(S-farnesyl or geranylgeranyl)C-P1'-P2'-P3'-COOH where P1' and P2' are amino acids with aliphatic side chains and P3' is any C-terminal residue.. Proteolytically removes the C-terminal three residues of farnesylated proteins. The polypeptide is CAAX prenyl protease 1 homolog (FACE1) (Oryza sativa subsp. japonica (Rice)).